The chain runs to 205 residues: Large ribosomal subunit protein uL4 (205 aa).

The disordered stretch occupies residues arginine 45–tyrosine 97. Residues glycine 60–glycine 71 are compositionally biased toward basic residues.

The protein belongs to the universal ribosomal protein uL4 family. Part of the 50S ribosomal subunit.

One of the primary rRNA binding proteins, this protein initially binds near the 5'-end of the 23S rRNA. It is important during the early stages of 50S assembly. It makes multiple contacts with different domains of the 23S rRNA in the assembled 50S subunit and ribosome. Functionally, forms part of the polypeptide exit tunnel. The polypeptide is Large ribosomal subunit protein uL4 (Lactobacillus johnsonii (strain CNCM I-12250 / La1 / NCC 533)).